The chain runs to 385 residues: Beta sliding clamp (385 aa).

It belongs to the beta sliding clamp family. In terms of assembly, forms a ring-shaped head-to-tail homodimer around DNA which binds and tethers DNA polymerases and other proteins to the DNA. The DNA replisome complex has a single clamp-loading complex (3 tau and 1 each of delta, delta', psi and chi subunits) which binds 3 Pol III cores (1 core on the leading strand and 2 on the lagging strand) each with a beta sliding clamp dimer. Additional proteins in the replisome are other copies of gamma, psi and chi, Ssb, DNA helicase and RNA primase.

The protein resides in the cytoplasm. Its function is as follows. Confers DNA tethering and processivity to DNA polymerases and other proteins. Acts as a clamp, forming a ring around DNA (a reaction catalyzed by the clamp-loading complex) which diffuses in an ATP-independent manner freely and bidirectionally along dsDNA. Initially characterized for its ability to contact the catalytic subunit of DNA polymerase III (Pol III), a complex, multichain enzyme responsible for most of the replicative synthesis in bacteria; Pol III exhibits 3'-5' exonuclease proofreading activity. The beta chain is required for initiation of replication as well as for processivity of DNA replication. This is Beta sliding clamp (dnaN) from Borreliella burgdorferi (strain ATCC 35210 / DSM 4680 / CIP 102532 / B31) (Borrelia burgdorferi).